Here is a 289-residue protein sequence, read N- to C-terminus: Diaminopimelate epimerase (289 aa).

Substrate is bound by residues N13, Q47, and N67. C76 (proton donor) is an active-site residue. Residues 77–78, N167, N200, and 218–219 contribute to the substrate site; these read GN and ER. The Proton acceptor role is filled by C227. 228 to 229 serves as a coordination point for substrate; the sequence is GT.

It belongs to the diaminopimelate epimerase family. Homodimer.

It is found in the cytoplasm. It catalyses the reaction (2S,6S)-2,6-diaminopimelate = meso-2,6-diaminopimelate. It participates in amino-acid biosynthesis; L-lysine biosynthesis via DAP pathway; DL-2,6-diaminopimelate from LL-2,6-diaminopimelate: step 1/1. Its function is as follows. Catalyzes the stereoinversion of LL-2,6-diaminopimelate (L,L-DAP) to meso-diaminopimelate (meso-DAP), a precursor of L-lysine and an essential component of the bacterial peptidoglycan. The sequence is that of Diaminopimelate epimerase from Burkholderia thailandensis (strain ATCC 700388 / DSM 13276 / CCUG 48851 / CIP 106301 / E264).